The primary structure comprises 774 residues: Subtilisin-like protease SBT3.5 (774 aa).

An N-terminal signal peptide occupies residues methionine 1–alanine 23. The propeptide at serine 24 to alanine 108 is removed in mature form. Positions valine 29–alanine 108 constitute an Inhibitor I9 domain. The region spanning threonine 112–alanine 621 is the Peptidase S8 domain. Asparagine 128 carries an N-linked (GlcNAc...) asparagine glycan. Residue aspartate 142 is the Charge relay system of the active site. An N-linked (GlcNAc...) asparagine glycan is attached at asparagine 201. The active-site Charge relay system is the histidine 217. N-linked (GlcNAc...) asparagine glycosylation is found at asparagine 232, asparagine 394, asparagine 409, and asparagine 539. The PA domain maps to serine 383 to isoleucine 478. Serine 552 acts as the Charge relay system in catalysis. N-linked (GlcNAc...) asparagine glycosylation is found at asparagine 644, asparagine 654, asparagine 725, and asparagine 755.

It belongs to the peptidase S8 family. As to expression, expressed in roots, leaves, stems, flower buds, developing siliques and mature seeds.

It is found in the secreted. Its subcellular location is the cell wall. Functionally, serine protease that cleaves the pectin methylesterase 17 (PME17) protein to release the PME17 mature form in the apoplasm. The sequence is that of Subtilisin-like protease SBT3.5 from Arabidopsis thaliana (Mouse-ear cress).